The following is a 664-amino-acid chain: E3 ubiquitin-protein ligase RNF139 (664 aa).

Alanine 2 is subject to N-acetylalanine. The next 12 membrane-spanning stretches (helical) occupy residues 51–71, 85–105, 125–145, 154–174, 178–198, 293–313, 323–343, 356–376, 390–410, 420–440, 469–489, and 495–512; these read IVLQ…VLIL, AFLL…HIDF, SLWM…VTLL, LIIL…PLHI, LVFT…AVKL, GMSA…LAFI, LGFV…LSGL, MCLL…PVLM, FPVL…SYVL, LFAA…SLTV, SIIV…TMMF, and IRAF…YLQA. An RING-type; atypical zinc finger spans residues 547-586; it reads CAICYHEFTTSARITPCNHYFHALCLRKWLYIQDTCPMCH. A compositionally biased stretch (polar residues) spans 599–610; sequence SNVSNNNGFTPP. Residues 599–664 form a disordered region; that stretch reads SNVSNNNGFT…AAEEFNDDTD (66 aa). Residues 616 to 628 are compositionally biased toward basic and acidic residues; sequence EAVREAAAESDRE. The span at 629 to 639 shows a compositional bias: acidic residues; that stretch reads LNEDDSTDCDD. Phosphoserine is present on serine 634. 2 positions are modified to phosphothreonine: threonine 635 and threonine 663.

As to quaternary structure, interacts with VHL. Interacts with MHC class I and HM13. Component of SCAP-SREBP complex composed of SREBF2, SCAP and RNF139; the complex hampers the interaction between SCAP and SEC24B, thereby reducing SREBF2 proteolytic processing. Interacts with SREBF2 (via C-terminal domain). Interacts with SCAP; the interaction inhibits the interaction of SCAP with SEC24B and hampering the ER to Golgi transport of the SCAP-SREBP complex. Interacts with SEC24B. Interacts with INSIG1 and INSIG2. Interacts with EIF3F and EIF3H; the interaction leads to protein translation inhibitions in a ubiquitination-dependent manner. Interacts with XBP1; the interaction induces ubiquitination and degradation of XBP1. Interacts with AUP1, AMFR and UBE2G2; interaction with AUP1 facilitates interaction of RNF139 with ubiquitin-conjugating enzyme UBE2G2 and ubiquitin ligase AMFR/gp78, leading to sterol-induced ubiquitination of HMGCR and its subsequent proteasomal degradation. Autoubiquitinated. Ubiquitination is induced by sterol and leads to ist degradation via the ubiquitin-proteasome pathway.

It is found in the endoplasmic reticulum membrane. It carries out the reaction S-ubiquitinyl-[E2 ubiquitin-conjugating enzyme]-L-cysteine + [acceptor protein]-L-lysine = [E2 ubiquitin-conjugating enzyme]-L-cysteine + N(6)-ubiquitinyl-[acceptor protein]-L-lysine.. Its pathway is protein modification; protein ubiquitination. E3-ubiquitin ligase; acts as a negative regulator of cell proliferation through mechanisms involving G2/M arrest and cell death. Required for MHC class I ubiquitination in cells expressing the cytomegalovirus protein US2 before dislocation from the endoplasmic reticulum (ER). Affects SREBP processing by hindering the SREBP-SCAP complex translocation from the ER to the Golgi, thereby reducing SREBF2 target gene expression. Involved in the sterol-accelerated degradation of HMGCR. This is achieved through binding to INSIG1 and/or INSIG2 at the ER membrane. In addition, interaction of RNF139 with AUP1 facilitates interaction of RNF139 with ubiquitin-conjugating enzyme UBE2G2 and ubiquitin ligase AMFR, leading to ubiquitination of HMGCR. The ubiquitinated HMGCR is then released from the ER by the complex into the cytosol for subsequent destruction. Required for INSIG1 ubiquitination. May be required for EIF3 complex ubiquitination. The protein is E3 ubiquitin-protein ligase RNF139 (RNF139) of Pongo abelii (Sumatran orangutan).